The chain runs to 20 residues: 26 kDa protein (20 aa).

The polypeptide is 26 kDa protein (Bacillus cereus).